Consider the following 284-residue polypeptide: Diaminopimelate epimerase (284 aa).

Substrate contacts are provided by N21, Q54, and N74. Residue C83 is the Proton donor of the active site. Substrate-binding positions include 84-85 (GN), N167, N200, and 218-219 (ER). C227 (proton acceptor) is an active-site residue. 228-229 (GS) provides a ligand contact to substrate.

This sequence belongs to the diaminopimelate epimerase family. In terms of assembly, homodimer.

The protein localises to the cytoplasm. The catalysed reaction is (2S,6S)-2,6-diaminopimelate = meso-2,6-diaminopimelate. Its pathway is amino-acid biosynthesis; L-lysine biosynthesis via DAP pathway; DL-2,6-diaminopimelate from LL-2,6-diaminopimelate: step 1/1. Functionally, catalyzes the stereoinversion of LL-2,6-diaminopimelate (L,L-DAP) to meso-diaminopimelate (meso-DAP), a precursor of L-lysine and an essential component of the bacterial peptidoglycan. The sequence is that of Diaminopimelate epimerase from Buchnera aphidicola subsp. Acyrthosiphon pisum (strain APS) (Acyrthosiphon pisum symbiotic bacterium).